Consider the following 488-residue polypeptide: MEVLSIAIVSFSFLLFLFFILRDSRPKNLPPGPRPSPIVGNLLQLGDKPHAEFAKLAQKYGELFSLKLGSQTVVVASSPAAAAEILKTHDKILSGRYVFQSFRVKEHVENSIVWSECNDNWKLLRKVCRTELFTPKMIESQSEIREAKAREMVKFLRGKEGEVVKIVEVVFGTLVNIFGNLIFSKDVFDLEDPTGGSVELKEHLWKLLDMGNSTNPADYFPIMGKLDLFGQRRAVAEVLQQIYDVWGVMLKERRGTKGSESKNDFVDVLLNAGLDDQKINALLMELFGAGTETSASTIEWAITELTKKPLVVSKIRLELVNVVGDNTVKESDLPHLPYLQAFVKETLRLHPPTPLLLPRRALETCTVMNYTIPKECQIMVNAWAIGRDPKTWDDPLNFKPERFLSSDVDYKGNDFELIPFGGGRRICPGLPLASQFSNLIVATLVQNFEWSLPQGMSTSELSMDEKFGLTLQKDPPLLIVLKARASNI.

Residues 2–21 (EVLSIAIVSFSFLLFLFFIL) form a helical membrane-spanning segment. Cys427 is a binding site for heme.

This sequence belongs to the cytochrome P450 family. Heme is required as a cofactor. Expressed at low levels in roots.

It localises to the endoplasmic reticulum membrane. It is found in the microsome membrane. It carries out the reaction (S)-N-methylcoclaurine + reduced [NADPH--hemoprotein reductase] + O2 = (S)-3'-hydroxy-N-methylcoclaurine + oxidized [NADPH--hemoprotein reductase] + H2O + H(+). It functions in the pathway alkaloid biosynthesis; (S)-reticuline biosynthesis; (S)-reticuline from (S)-norcoclaurine: step 3/4. Functionally, 3'-hydroxylation of (S)-N-methylcoclaurine. This chain is Probable (S)-N-methylcoclaurine 3'-hydroxylase isozyme 2 (CYP80B2), found in Coptis japonica (Japanese goldthread).